The primary structure comprises 144 residues: MLMPKRVKYRREHRGKMRGRAKGGTEVTFGEFGLQAQNASWITNRQIEAARRAMTRYMKRGGKVWIKIFPSKPYTAKPLEVRMGSGKGAPEGWVAVVKPGKVMFEIAGVSEEVAREALRLAAHKLPVKCKFVKREENGGESNEN.

This sequence belongs to the universal ribosomal protein uL16 family. As to quaternary structure, part of the 50S ribosomal subunit.

Functionally, binds 23S rRNA and is also seen to make contacts with the A and possibly P site tRNAs. The sequence is that of Large ribosomal subunit protein uL16 from Bacillus cytotoxicus (strain DSM 22905 / CIP 110041 / 391-98 / NVH 391-98).